A 279-amino-acid chain; its full sequence is Shikimate dehydrogenase (NADP(+)) (279 aa).

Shikimate is bound by residues 19–21 and Thr-66; that span reads SFS. Lys-70 serves as the catalytic Proton acceptor. An NADP(+)-binding site is contributed by Glu-82. Asn-91 and Asp-106 together coordinate shikimate. Residues 130–134 and Leu-222 each bind NADP(+); that span reads GSGGA. Tyr-224 contacts shikimate. NADP(+) is bound at residue Gly-245.

The protein belongs to the shikimate dehydrogenase family. As to quaternary structure, homodimer.

It catalyses the reaction shikimate + NADP(+) = 3-dehydroshikimate + NADPH + H(+). It participates in metabolic intermediate biosynthesis; chorismate biosynthesis; chorismate from D-erythrose 4-phosphate and phosphoenolpyruvate: step 4/7. In terms of biological role, involved in the biosynthesis of the chorismate, which leads to the biosynthesis of aromatic amino acids. Catalyzes the reversible NADPH linked reduction of 3-dehydroshikimate (DHSA) to yield shikimate (SA). The polypeptide is Shikimate dehydrogenase (NADP(+)) (Methanococcus maripaludis (strain C6 / ATCC BAA-1332)).